We begin with the raw amino-acid sequence, 150 residues long: Large ribosomal subunit protein eL19 (150 aa).

The tract at residues 59–89 (SRYRARIRHEQKKKGRHRGPGSRKGKKTARM) is disordered. Positions 61-89 (YRARIRHEQKKKGRHRGPGSRKGKKTARM) are enriched in basic residues.

Belongs to the eukaryotic ribosomal protein eL19 family. In terms of assembly, part of the 50S ribosomal subunit.

Its function is as follows. Binds to the 23S rRNA. The sequence is that of Large ribosomal subunit protein eL19 from Pyrococcus horikoshii (strain ATCC 700860 / DSM 12428 / JCM 9974 / NBRC 100139 / OT-3).